The chain runs to 111 residues: Large ribosomal subunit protein P2-2 (111 aa).

A disordered region spans residues 86-111 (APAAAAAKKDEPEEEADDDMGFGLFD).

Belongs to the eukaryotic ribosomal protein P1/P2 family. As to quaternary structure, P1 and P2 exist as dimers at the large ribosomal subunit. Phosphorylated.

Plays an important role in the elongation step of protein synthesis. This Leishmania infantum protein is Large ribosomal subunit protein P2-2 (LIP').